The chain runs to 612 residues: Zinc metalloproteinase-disintegrin-like HV1 (612 aa).

Positions 1 to 20 (MIQVLLVTICLAVFPYQGSS) are cleaved as a signal peptide. The propeptide occupies 21–188 (IILESGNVND…SIKEDSQSNL (168 aa)). One can recognise a Peptidase M12B domain in the interval 200 to 396 (KYVKFFLVAD…NMPQCILKKP (197 aa)). N-linked (GlcNAc...) asparagine glycosylation is present at Asn-219. 3 cysteine pairs are disulfide-bonded: Cys-311/Cys-391, Cys-351/Cys-375, and Cys-353/Cys-358. His-336 serves as a coordination point for Zn(2+). Glu-337 is a catalytic residue. Residues His-340 and His-346 each coordinate Zn(2+). A Disintegrin domain is found at 404–489 (PPVCGNYFVE…AECTDRFQRN (86 aa)). Residues Val-406, Asn-409, Phe-411, Glu-413, Glu-416, and Asp-419 each contribute to the Ca(2+) site. 14 disulfides stabilise this stretch: Cys-407/Cys-436, Cys-418/Cys-431, Cys-420/Cys-426, Cys-430/Cys-453, Cys-444/Cys-450, Cys-449/Cys-475, Cys-462/Cys-482, Cys-469/Cys-500, Cys-493/Cys-505, Cys-512/Cys-562, Cys-527/Cys-573, Cys-540/Cys-550, Cys-557/Cys-599, and Cys-593/Cys-605. Residues 468 to 470 (ECD) carry the D/ECD-tripeptide motif. Residues Asp-470, Met-471, Asp-473, Asp-484, and Arg-485 each contribute to the Ca(2+) site. Asn-502 carries N-linked (GlcNAc...) asparagine glycosylation. N-linked (GlcNAc...) asparagine glycosylation is present at Asn-609.

This sequence belongs to the venom metalloproteinase (M12B) family. P-III subfamily. P-IIIc sub-subfamily. As to quaternary structure, homodimer; disulfide-linked. Zn(2+) serves as cofactor. In terms of tissue distribution, expressed by the venom gland.

Its subcellular location is the secreted. With respect to regulation, inhibited by EDTA and EGTA. Its function is as follows. Snake venom zinc metalloproteinase-disintegrin-like that potently activates prothrombin (F2). Does not elicit any hemorrhagic response. Barely inhibits collagen-induced platelet aggregation. Hydrolyzes the alpha-chain of fibrin and fibrinogen (FGA), without affecting the Bbeta- and gamma-chains. Induces apoptosis in cultured vascular endothelial cells. The polypeptide is Zinc metalloproteinase-disintegrin-like HV1 (Protobothrops flavoviridis (Habu)).